A 74-amino-acid polypeptide reads, in one-letter code: Neuropeptide-like protein 33 (74 aa).

A signal peptide spans 1 to 21; that stretch reads MISTSLLLVVLLFAILAIVDA. Tyr72 bears the Tyrosine amide mark.

Belongs to the YARP (YGGW-amide related peptide) family. In terms of tissue distribution, expressed in hypoderm.

Its subcellular location is the secreted. Its function is as follows. May have antifungic activity against D.coniospora. The sequence is that of Neuropeptide-like protein 33 (nlp-33) from Caenorhabditis elegans.